Here is a 197-residue protein sequence, read N- to C-terminus: Fe/S biogenesis protein NfuA (197 aa).

[4Fe-4S] cluster contacts are provided by Cys155 and Cys158.

This sequence belongs to the NfuA family. In terms of assembly, homodimer. [4Fe-4S] cluster is required as a cofactor.

Involved in iron-sulfur cluster biogenesis. Binds a 4Fe-4S cluster, can transfer this cluster to apoproteins, and thereby intervenes in the maturation of Fe/S proteins. Could also act as a scaffold/chaperone for damaged Fe/S proteins. This chain is Fe/S biogenesis protein NfuA, found in Pseudomonas savastanoi pv. phaseolicola (strain 1448A / Race 6) (Pseudomonas syringae pv. phaseolicola (strain 1448A / Race 6)).